Here is a 143-residue protein sequence, read N- to C-terminus: Large ribosomal subunit protein uL11 (143 aa).

It belongs to the universal ribosomal protein uL11 family. As to quaternary structure, part of the ribosomal stalk of the 50S ribosomal subunit. Interacts with L10 and the large rRNA to form the base of the stalk. L10 forms an elongated spine to which L12 dimers bind in a sequential fashion forming a multimeric L10(L12)X complex. Post-translationally, one or more lysine residues are methylated.

Its function is as follows. Forms part of the ribosomal stalk which helps the ribosome interact with GTP-bound translation factors. The chain is Large ribosomal subunit protein uL11 from Treponema denticola (strain ATCC 35405 / DSM 14222 / CIP 103919 / JCM 8153 / KCTC 15104).